The primary structure comprises 483 residues: Glutamate--tRNA ligase (483 aa).

The short motif at proline 9 to asparagine 19 is the 'HIGH' region element. The short motif at lysine 250 to arginine 254 is the 'KMSKS' region element. Lysine 253 provides a ligand contact to ATP.

The protein belongs to the class-I aminoacyl-tRNA synthetase family. Glutamate--tRNA ligase type 1 subfamily. Monomer.

The protein resides in the cytoplasm. The catalysed reaction is tRNA(Glu) + L-glutamate + ATP = L-glutamyl-tRNA(Glu) + AMP + diphosphate. Functionally, catalyzes the attachment of glutamate to tRNA(Glu) in a two-step reaction: glutamate is first activated by ATP to form Glu-AMP and then transferred to the acceptor end of tRNA(Glu). The chain is Glutamate--tRNA ligase from Blochmanniella floridana.